A 180-amino-acid chain; its full sequence is F17 fimbrial protein (180 aa).

The signal sequence occupies residues 1–21; sequence MQKIQFILGILAAASSSATLA. Cysteines 37 and 77 form a disulfide.

It belongs to the fimbrial protein family.

It localises to the fimbrium. Functionally, fimbriae (also called pili), polar filaments radiating from the surface of the bacterium to a length of 0.5-1.5 micrometers and numbering 100-300 per cell, enable bacteria to colonize the epithelium of specific host organs. The sequence is that of F17 fimbrial protein (F17a-A) from Escherichia coli.